A 459-amino-acid chain; its full sequence is MAITGTIAAIATAIVPQQGSVGIVRVSGSQAIAIAQTLFDAPGKQVWESHRILYGYIRHPQTRQIVDEALLLLMKAPRSYTREDVVEFHCHGGIIAVQQVLQLCLESGARLAQPGEFTLRAFLNGRLDLTQAESIADLVGARSPQAAQTALAGLQGKLAHPIRQLRANCLDILAEIEARIDFEEDLPPLDDEAIISDIENIAAEISQLLATKDKGELLRTGLKVAIVGRPNVGKSSLLNAWSQSDRAIVTDLPGTTRDVVESQLVVGGIPVQVLDTAGIRETSDQVEKIGVERSRQAANTADLVLLTIDAATGWTTGDQEIYEQVKHRPLILVMNKIDLVEKQLITSLEYPENITQIVHTAAAQKQGIDSLETAILEIVQTGKVQAADMDLAINQRQAAALTQAKMSLEQVQATITQQLPLDFWTIDLRGAIQALGEITGEEVTESVLDRIFSRFCIGK.

Residues arginine 25, glutamate 87, and arginine 126 each contribute to the (6S)-5-formyl-5,6,7,8-tetrahydrofolate site. One can recognise a TrmE-type G domain in the interval 221 to 380; that stretch reads GLKVAIVGRP…LETAILEIVQ (160 aa). Asparagine 231 is a binding site for K(+). GTP-binding positions include 231–236, 250–256, and 275–278; these read NVGKSS, TDLPGTT, and DTAG. Mg(2+) is bound at residue serine 235. K(+) is bound by residues threonine 250, leucine 252, and threonine 255. Threonine 256 provides a ligand contact to Mg(2+). Lysine 459 provides a ligand contact to (6S)-5-formyl-5,6,7,8-tetrahydrofolate.

This sequence belongs to the TRAFAC class TrmE-Era-EngA-EngB-Septin-like GTPase superfamily. TrmE GTPase family. As to quaternary structure, homodimer. Heterotetramer of two MnmE and two MnmG subunits. K(+) serves as cofactor.

Its subcellular location is the cytoplasm. In terms of biological role, exhibits a very high intrinsic GTPase hydrolysis rate. Involved in the addition of a carboxymethylaminomethyl (cmnm) group at the wobble position (U34) of certain tRNAs, forming tRNA-cmnm(5)s(2)U34. The sequence is that of tRNA modification GTPase MnmE from Nostoc sp. (strain PCC 7120 / SAG 25.82 / UTEX 2576).